The chain runs to 225 residues: Uracil-DNA glycosylase (225 aa).

Catalysis depends on aspartate 68, which acts as the Proton acceptor.

The protein belongs to the uracil-DNA glycosylase (UDG) superfamily. UNG family.

The protein resides in the cytoplasm. It catalyses the reaction Hydrolyzes single-stranded DNA or mismatched double-stranded DNA and polynucleotides, releasing free uracil.. Functionally, excises uracil residues from the DNA which can arise as a result of misincorporation of dUMP residues by DNA polymerase or due to deamination of cytosine. This chain is Uracil-DNA glycosylase, found in Mycolicibacterium gilvum (strain PYR-GCK) (Mycobacterium gilvum (strain PYR-GCK)).